Here is a 505-residue protein sequence, read N- to C-terminus: Protein phosphatase 1J (505 aa).

The tract at residues 1–103 (MLNRVRSAVA…PPDTGRRLPW (103 aa)) is disordered. Low complexity predominate over residues 27–50 (DLPNAASAPPAAAPEAPRSPPAKA). Phosphoserine occurs at positions 66 and 76. Residues 104–498 (STGYAEVINA…DDISVFVIPL (395 aa)) enclose the PPM-type phosphatase domain.

Belongs to the PP2C family. Interacts with UBE2I/UBC9.

It carries out the reaction O-phospho-L-seryl-[protein] + H2O = L-seryl-[protein] + phosphate. It catalyses the reaction O-phospho-L-threonyl-[protein] + H2O = L-threonyl-[protein] + phosphate. The polypeptide is Protein phosphatase 1J (PPM1J) (Homo sapiens (Human)).